The chain runs to 278 residues: Small ribosomal subunit protein uS9m (278 aa).

The transit peptide at 1–10 (MFSRLSLFRR) directs the protein to the mitochondrion. The tract at residues 259–278 (VERKKPGKKKARKMPTWVKR) is disordered.

It belongs to the universal ribosomal protein uS9 family. In terms of assembly, component of the mitochondrial small ribosomal subunit (mt-SSU). Mature yeast 74S mitochondrial ribosomes consist of a small (37S) and a large (54S) subunit. The 37S small subunit contains a 15S ribosomal RNA (15S mt-rRNA) and 34 different proteins. The 54S large subunit contains a 21S rRNA (21S mt-rRNA) and 46 different proteins.

The protein localises to the mitochondrion. Component of the mitochondrial ribosome (mitoribosome), a dedicated translation machinery responsible for the synthesis of mitochondrial genome-encoded proteins, including at least some of the essential transmembrane subunits of the mitochondrial respiratory chain. The mitoribosomes are attached to the mitochondrial inner membrane and translation products are cotranslationally integrated into the membrane. This Saccharomyces cerevisiae (strain ATCC 204508 / S288c) (Baker's yeast) protein is Small ribosomal subunit protein uS9m (MRPS9).